Here is a 162-residue protein sequence, read N- to C-terminus: Small ribosomal subunit protein uS13 (162 aa).

The segment at 142–162 is disordered; it reads RGQRTKSTGRRGSTVGVSRKK.

This sequence belongs to the universal ribosomal protein uS13 family. Part of the 30S ribosomal subunit. Forms a loose heterodimer with protein S19. Forms two bridges to the 50S subunit in the 70S ribosome.

Located at the top of the head of the 30S subunit, it contacts several helices of the 16S rRNA. In the 70S ribosome it contacts the 23S rRNA (bridge B1a) and protein L5 of the 50S subunit (bridge B1b), connecting the 2 subunits; these bridges are implicated in subunit movement. In Methanosarcina mazei (strain ATCC BAA-159 / DSM 3647 / Goe1 / Go1 / JCM 11833 / OCM 88) (Methanosarcina frisia), this protein is Small ribosomal subunit protein uS13.